Reading from the N-terminus, the 728-residue chain is tRNA (guanine(27)-N(2))-dimethyltransferase (728 aa).

Acidic residues predominate over residues 1 to 10; it reads MENMAEEELL. 2 disordered regions span residues 1–78 and 98–118; these read MENM…SKRH and DVDS…SQTC. The residue at position 23 (Thr-23) is a Phosphothreonine. Residues 23-33 are compositionally biased toward pro residues; sequence TPAPDSAPVPA. A compositionally biased stretch (low complexity) spans 34–46; the sequence is PAADTALDSAPTP. The segment covering 47–61 has biased composition (pro residues); the sequence is DSDPAPALAPAPAPA. Ser-63 is modified (phosphoserine). Positions 101–118 are enriched in polar residues; that stretch reads SASSLNSDNPGTENSQTC. The Nucleolar localization signal motif lies at 132–136; sequence HKLRR. The C2H2-type zinc-finger motif lies at 181–203; that stretch reads YHCIICSATITRRTDMLGHVKRH. A Trm1 methyltransferase domain is found at 224-683; sequence EILKETDTDI…APLMQFKSIL (460 aa). Positions 257, 304, 352, and 353 each coordinate S-adenosyl-L-methionine. Residues Cys-483, Cys-486, Cys-508, and Cys-510 each contribute to the Zn(2+) site. Lys-580 participates in a covalent cross-link: Glycyl lysine isopeptide (Lys-Gly) (interchain with G-Cter in SUMO2). Ser-607 is subject to Phosphoserine. The disordered stretch occupies residues 693–728; it reads GAQSEGQMPPAAEDTVTDRVEMSVSDKAEASGCRRW. Basic and acidic residues predominate over residues 708-721; sequence VTDRVEMSVSDKAE.

This sequence belongs to the class I-like SAM-binding methyltransferase superfamily. Trm1 family. In terms of tissue distribution, expressed in various neuronal structures during embryonic development, including spinal ganglia, trigeminal nerve and ganglion, olfactory and nasopharyngeal epithelium, nuclei of the metencephalon, thalamus and medulla oblongata. Also expressed in lung, esophagus, epiglottis, ependyma, vertebral column, spinal cord and brown adipose tissue. Expression persists in the adult brain with dynamically changing patterns in cortex and cerebellum.

The protein resides in the nucleus. It is found in the nucleolus. The catalysed reaction is guanosine(27) in tRNA(Tyr) + 2 S-adenosyl-L-methionine = N(2)-dimethylguanosine(27) in tRNA(Tyr) + 2 S-adenosyl-L-homocysteine + 2 H(+). Functionally, specifically dimethylates a single guanine residue at position 27 of tRNA(Tyr) using S-adenosyl-L-methionine as donor of the methyl groups. Dimethylation at position 27 of tRNA(Tyr) is required for efficient translation of tyrosine codons. Also required to maintain 3-(3-amino-3-carboxypropyl)uridine (acp3U) in the D-loop of several cytoplasmic tRNAs. May play a role in motor coordination and exploratory behavior. This chain is tRNA (guanine(27)-N(2))-dimethyltransferase, found in Mus musculus (Mouse).